A 350-amino-acid chain; its full sequence is Erythronate-4-phosphate dehydrogenase (350 aa).

Residues serine 45 and threonine 66 each coordinate substrate. Residues 124–125, aspartate 144, 203–205, and aspartate 226 each bind NAD(+); these read QV and ASR. The active site involves arginine 205. Glutamate 231 is a catalytic residue. Histidine 248 acts as the Proton donor in catalysis. Glycine 251 is an NAD(+) binding site.

Belongs to the D-isomer specific 2-hydroxyacid dehydrogenase family. PdxB subfamily. Homodimer.

Its subcellular location is the cytoplasm. The catalysed reaction is 4-phospho-D-erythronate + NAD(+) = (R)-3-hydroxy-2-oxo-4-phosphooxybutanoate + NADH + H(+). It functions in the pathway cofactor biosynthesis; pyridoxine 5'-phosphate biosynthesis; pyridoxine 5'-phosphate from D-erythrose 4-phosphate: step 2/5. Functionally, catalyzes the oxidation of erythronate-4-phosphate to 3-hydroxy-2-oxo-4-phosphonooxybutanoate. The protein is Erythronate-4-phosphate dehydrogenase of Legionella pneumophila (strain Lens).